The sequence spans 728 residues: Catalase-peroxidase 1 (728 aa).

The signal sequence occupies residues 1-16 (MDKAQHTQGKCPVAHG). A cross-link (tryptophyl-tyrosyl-methioninium (Trp-Tyr) (with M-251)) is located at residues 97-225 (WHSAGTYRMA…LAAVMMGLIY (129 aa)). His98 acts as the Proton acceptor in catalysis. The tryptophyl-tyrosyl-methioninium (Tyr-Met) (with W-97) cross-link spans 225–251 (YVNPEGVDGQPDPLKTAQDIRVTFERM). Residue His266 participates in heme b binding.

Belongs to the peroxidase family. Peroxidase/catalase subfamily. Homodimer or homotetramer. Requires heme b as cofactor. Post-translationally, formation of the three residue Trp-Tyr-Met cross-link is important for the catalase, but not the peroxidase activity of the enzyme.

It catalyses the reaction H2O2 + AH2 = A + 2 H2O. It carries out the reaction 2 H2O2 = O2 + 2 H2O. In terms of biological role, bifunctional enzyme with both catalase and broad-spectrum peroxidase activity. The chain is Catalase-peroxidase 1 from Shewanella frigidimarina (strain NCIMB 400).